The chain runs to 291 residues: Probable protein S-acyltransferase 12 (291 aa).

The next 2 membrane-spanning stretches (helical) occupy residues 14–34 and 49–69; these read GYFMILLVVAVVGVSYYAVVV and LSALAALIIFVFHFLLIMLLW. The DHHC domain occupies 111-161; sequence GYCTKCRNVKPPRCHHCSVCQRCVLKMDHHCVWIVNCVGARNYKFFLLFLF. C141 (S-palmitoyl cysteine intermediate) is an active-site residue. 2 helical membrane-spanning segments follow: residues 155 to 175 and 198 to 218; these read FFLLFLFYTFLETMLDVIVLL and LVLAFVLNFAFVLSLLCFVVM.

Belongs to the DHHC palmitoyltransferase family.

The protein resides in the cell membrane. The enzyme catalyses L-cysteinyl-[protein] + hexadecanoyl-CoA = S-hexadecanoyl-L-cysteinyl-[protein] + CoA. Its function is as follows. Palmitoyl acyltransferase. The chain is Probable protein S-acyltransferase 12 (PAT12) from Arabidopsis thaliana (Mouse-ear cress).